The chain runs to 424 residues: MDQPSGRSFMQVLCEKYSPENFPYRRGPGMGVHVPATPQGSPMKDRLNLPSVLVLNSCGITCAGDEKEIAAFCAHVSELDLSDNKLEDWHEVSKIVSNVPQLEFLNLSSNPLNLSVLERTCAGSFSGVRKLVLNNSKASWETVHMILQELPDLEELFLCLNDYETVSCPSICCHSLKLLHITDNNLQDWTEIRKLGVMFPSLDTLVLANNHLNAIEEPDDSLARLFPNLRSISLHKSGLQSWEDIDKLNSFPKLEEVRLLGIPLLQPYTTEERRKLVIARLPSVSKLNGSVVTDGEREDSERFFIRYYVDVPQEEVPFRYHELITKYGKLEPLAEVDLRPQSSAKVEVHFNDQVEEMSIRLDQTVAELKKQLKTLVQLPTSNMLLYYFDHEAPFGPEEMKYSSRALHSFGIRDGDKIYVESKTK.

A phosphoserine mark is found at Ser18 and Ser41. 7 LRR repeats span residues 73 to 98 (CAHV…IVSN), 99 to 123 (VPQL…TCAG), 124 to 147 (SFSG…HMIL), 150 to 172 (LPDL…PSIC), 173 to 197 (CHSL…KLGV), 199 to 224 (FPSL…SLAR), and 226 to 250 (FPNL…KLNS). Residues 262–303 (IPLLQPYTTEERRKLVIARLPSVSKLNGSVVTDGEREDSERF) enclose the LRRCT domain. The region spanning 334-424 (AEVDLRPQSS…DKIYVESKTK (91 aa)) is the Ubiquitin-like domain. The stretch at 349-375 (HFNDQVEEMSIRLDQTVAELKKQLKTL) forms a coiled coil.

As to expression, abundantly expressed in testis, but is also present in several tissues at a much lower level.

It localises to the cytoplasm. The protein localises to the cytoskeleton. Its function is as follows. Acts as a regulator of tubulin stability. The polypeptide is Tubulin-specific chaperone cofactor E-like protein (TBCEL) (Homo sapiens (Human)).